We begin with the raw amino-acid sequence, 297 residues long: Mitochondrial ornithine transporter 1 (297 aa).

3 Solcar repeats span residues 15–97 (GSPA…LKLT), 102–205 (DPTL…FKKN), and 212–292 (KPHF…FRET). 6 helical membrane-spanning segments follow: residues 18–38 (ASTF…GYPL), 72–91 (GLTL…FTVY), 107–127 (YFIS…PFEY), 184–204 (HLTR…TFKK), 215–235 (FAYA…VFPV), and 264–285 (IYRG…NFTL).

The protein belongs to the mitochondrial carrier (TC 2.A.29) family.

The protein localises to the mitochondrion inner membrane. In terms of biological role, required for arginine biosynthesis. Transports ornithine synthesized from glutamate in the mitochondrial matrix to the cytosol, where it is converted to arginine. The sequence is that of Mitochondrial ornithine transporter 1 from Schizosaccharomyces pombe (strain 972 / ATCC 24843) (Fission yeast).